The sequence spans 165 residues: Transmembrane protein 128 (165 aa).

4 consecutive transmembrane segments (helical) span residues 49 to 69 (NIHSGFWILASIVVTYYVDFF), 81 to 101 (WFLFGSALLLVSVSIAFYCIV), 119 to 139 (LIPITTATFIVAGICFNVALW), and 144 to 164 (FFTPVLLFTQFMGVVMLTSLL).

It localises to the membrane. This chain is Transmembrane protein 128 (TMEM128), found in Bos taurus (Bovine).